The following is a 314-amino-acid chain: Methionyl-tRNA formyltransferase (314 aa).

111–114 (SLLP) serves as a coordination point for (6S)-5,6,7,8-tetrahydrofolate.

This sequence belongs to the Fmt family.

It catalyses the reaction L-methionyl-tRNA(fMet) + (6R)-10-formyltetrahydrofolate = N-formyl-L-methionyl-tRNA(fMet) + (6S)-5,6,7,8-tetrahydrofolate + H(+). Its function is as follows. Attaches a formyl group to the free amino group of methionyl-tRNA(fMet). The formyl group appears to play a dual role in the initiator identity of N-formylmethionyl-tRNA by promoting its recognition by IF2 and preventing the misappropriation of this tRNA by the elongation apparatus. The polypeptide is Methionyl-tRNA formyltransferase (Coxiella burnetii (strain CbuG_Q212) (Coxiella burnetii (strain Q212))).